Reading from the N-terminus, the 1011-residue chain is DNA-directed RNA polymerase 2, chloroplastic/mitochondrial (1011 aa).

The segment at Lys307 to Gln326 is disordered. Residues Asp712, Lys787, and Asp944 contribute to the active site.

Belongs to the phage and mitochondrial RNA polymerase family. As to quaternary structure, interacts with NIP1 and NIP2.

Its subcellular location is the plastid. The protein resides in the chloroplast. It is found in the mitochondrion. It carries out the reaction RNA(n) + a ribonucleoside 5'-triphosphate = RNA(n+1) + diphosphate. Its function is as follows. DNA-dependent RNA polymerase catalyzes the transcription of DNA into RNA using the four ribonucleoside triphosphates as substrates. This Arabidopsis thaliana (Mouse-ear cress) protein is DNA-directed RNA polymerase 2, chloroplastic/mitochondrial (RPOT2).